Reading from the N-terminus, the 223-residue chain is Capsid protein (223 aa).

Over residues 1–19 (MDDETKKLKNKNKETKEGD) the composition is skewed to basic and acidic residues. The segment at 1–21 (MDDETKKLKNKNKETKEGDDV) is disordered.

Belongs to the closteroviridae capsid protein family. In terms of processing, consists of at least two size variants, CP1 and CP2, which result of post-translational proteolysis at sites approximately 12 to 15 and 26 AA from the N-terminus respectively.

It is found in the virion. This chain is Capsid protein, found in Citrus tristeza virus (isolate T36) (CTV).